The chain runs to 47 residues: Photosystem II reaction center protein K (47 aa).

A propeptide spanning residues 1 to 10 is cleaved from the precursor; it reads MALINFDLLA. A helical transmembrane segment spans residues 26–46; it reads LPLIPLFFFLLVFVWQAAVGF.

Belongs to the PsbK family. As to quaternary structure, PSII is composed of 1 copy each of membrane proteins PsbA, PsbB, PsbC, PsbD, PsbE, PsbF, PsbH, PsbI, PsbJ, PsbK, PsbL, PsbM, PsbT, PsbX, PsbY, Psb30/Ycf12, peripheral proteins PsbO, CyanoQ (PsbQ), PsbU, PsbV and a large number of cofactors. It forms dimeric complexes.

Its subcellular location is the cellular thylakoid membrane. One of the components of the core complex of photosystem II (PSII). PSII is a light-driven water:plastoquinone oxidoreductase that uses light energy to abstract electrons from H(2)O, generating O(2) and a proton gradient subsequently used for ATP formation. It consists of a core antenna complex that captures photons, and an electron transfer chain that converts photonic excitation into a charge separation. The chain is Photosystem II reaction center protein K from Prochlorococcus marinus (strain NATL2A).